Here is a 636-residue protein sequence, read N- to C-terminus: Receptor-like kinase LIP1 (636 aa).

The interval 18-57 is disordered; that stretch reads NAPCTTNETNDDNVEHDEFRPPVVATTKRTEEREPAEQQP. The Protein kinase domain maps to 74 to 352; the sequence is FRQECLLGEG…SDVMVALSFL (279 aa). ATP contacts are provided by residues 80-88 and Lys-103; that span reads LGEGGFGRV. The active-site Proton acceptor is Asp-201. Residues Ser-205 and Ser-236 each carry the phosphoserine modification. Residue Thr-242 is modified to Phosphothreonine. Phosphotyrosine is present on Tyr-250. The tract at residues 389–636 is disordered; it reads FCISRKDVGN…EEEHISSDHD (248 aa). Residues 403–434 are a coiled coil; it reads SSDSEDEEEEKEQKAEKEEESTSKKRQEQEET. Residues 413 to 431 are compositionally biased toward basic and acidic residues; that stretch reads KEQKAEKEEESTSKKRQEQ. The span at 432–455 shows a compositional bias: acidic residues; that stretch reads EETATDSDDESDSNSEKDQEEEQS. Polar residues predominate over residues 480 to 489; that stretch reads TNATAQSLKI. Basic and acidic residues-rich tracts occupy residues 522-531 and 554-566; these read DSGRDHDDSS and HETRSYSDHDDSP. Positions 567-576 are enriched in polar residues; it reads RNTSMRINSL. Basic and acidic residues-rich tracts occupy residues 588-603 and 619-636; these read NHQTRLEHIHSSKSED and SLHRIEAKEEEHISSDHD.

Belongs to the protein kinase superfamily. Ser/Thr protein kinase family. Interacts with PRK6. Post-translationally, palmitoylated. As to expression, expressed in mature pollen and in germinating pollen tubes.

It is found in the cell membrane. The protein resides in the cytoplasm. Functionally, involved in pollen tube guidance into micropyle. Participates in perception of the ovule-secreted peptide signal LURE1. The sequence is that of Receptor-like kinase LIP1 from Arabidopsis thaliana (Mouse-ear cress).